A 506-amino-acid chain; its full sequence is MAVDMELDGGGDGKGKAPPQISLSGLFLACMVAGGVQYGWALQLSLLTPYVQTLGIPHALTSVMWLCGPIAGLIVQPCVGLYSDKCTSSLGRRRPFILTGCIIICISVIVIGFSSDIGYALGDTTEDCKVYRGPRYHAAAAFILGFWLLDFSNNTVQGPARALMADLSGRHGPSAANAIFCSWMALGNILGYSSGSTNDWHKWFPFLMTRACCEACANLKAAFLVAVVFLGLSTAVTMVFAREVALDPVAAAKRNEGEASGLLAVFKGMKNLPVGMPSVLIVTGLTWLSWFPFILFDTDWMGREIYHGRPDGSPAEVTAFQEGVRQGAFGLLLNSIVLGISSFLIEPMCRRLGARAVWVMSSAVVCVAMAAVSVLSAWSLGDFGGSVQDAARAPAEEGGVRASALALFVFLGLPFAVLCSVPFAVTAQLAASRGGGQGLCTGVLNISIVVPQMAIALGAGPWDELFGEGNIPAFAMASVFAAAAAAAGVVLLPKVSVRSVSMAGGH.

The Cytoplasmic segment spans residues 1 to 20; sequence MAVDMELDGGGDGKGKAPPQ. The chain crosses the membrane as a helical span at residues 21–41; sequence ISLSGLFLACMVAGGVQYGWA. Topologically, residues 42 to 54 are extracellular; sequence LQLSLLTPYVQTL. A helical membrane pass occupies residues 55–75; the sequence is GIPHALTSVMWLCGPIAGLIV. Over 76 to 94 the chain is Cytoplasmic; the sequence is QPCVGLYSDKCTSSLGRRR. A helical membrane pass occupies residues 95 to 115; it reads PFILTGCIIICISVIVIGFSS. Residues 116–135 are Extracellular-facing; sequence DIGYALGDTTEDCKVYRGPR. A helical transmembrane segment spans residues 136–156; the sequence is YHAAAAFILGFWLLDFSNNTV. At 157–171 the chain is on the cytoplasmic side; sequence QGPARALMADLSGRH. A helical transmembrane segment spans residues 172–192; that stretch reads GPSAANAIFCSWMALGNILGY. The Extracellular portion of the chain corresponds to 193–220; it reads SSGSTNDWHKWFPFLMTRACCEACANLK. Residues 221–241 form a helical membrane-spanning segment; sequence AAFLVAVVFLGLSTAVTMVFA. Residues 242 to 275 are Cytoplasmic-facing; it reads REVALDPVAAAKRNEGEASGLLAVFKGMKNLPVG. A helical membrane pass occupies residues 276–296; the sequence is MPSVLIVTGLTWLSWFPFILF. Over 297 to 327 the chain is Extracellular; sequence DTDWMGREIYHGRPDGSPAEVTAFQEGVRQG. A helical membrane pass occupies residues 328–348; sequence AFGLLLNSIVLGISSFLIEPM. At 349–355 the chain is on the cytoplasmic side; sequence CRRLGAR. The helical transmembrane segment at 356 to 376 threads the bilayer; the sequence is AVWVMSSAVVCVAMAAVSVLS. Residues 377 to 404 are Extracellular-facing; sequence AWSLGDFGGSVQDAARAPAEEGGVRASA. Residues 405-425 form a helical membrane-spanning segment; the sequence is LALFVFLGLPFAVLCSVPFAV. Residues 426–441 lie on the Cytoplasmic side of the membrane; the sequence is TAQLAASRGGGQGLCT. Residues 442–462 form a helical membrane-spanning segment; the sequence is GVLNISIVVPQMAIALGAGPW. Over 463-470 the chain is Extracellular; it reads DELFGEGN. Residues 471–491 traverse the membrane as a helical segment; it reads IPAFAMASVFAAAAAAAGVVL. Topologically, residues 492–506 are cytoplasmic; it reads LPKVSVRSVSMAGGH.

This sequence belongs to the glycoside-pentoside-hexuronide (GPH) cation symporter transporter (TC 2.A.2.4) family. As to quaternary structure, homodimer. As to expression, widely expressed. Highest expression in sink leaves and lowest in germinating seeds.

It localises to the cell membrane. The protein operates within glycan biosynthesis; sucrose metabolism. Responsible for the transport of sucrose into the cell, with the concomitant uptake of protons (symport system). May also transport other glucosides. This chain is Sucrose transport protein SUT3 (SUT3), found in Oryza sativa subsp. japonica (Rice).